Reading from the N-terminus, the 472-residue chain is Collagenase 3 (472 aa).

The first 19 residues, 1–19 (MHPGVLAAFLFLSWTRCWS), serve as a signal peptide directing secretion. Residues 20–104 (LPVPNDDDDD…PRCGVPDVGE (85 aa)) constitute a propeptide, activation peptide. The Cysteine switch motif lies at 95–102 (PRCGVPDV). Cys-97 is a Zn(2+) binding site. Residue Asn-118 is glycosylated (N-linked (GlcNAc...) asparagine). Asp-129 provides a ligand contact to Ca(2+). Asn-153 and Asn-159 each carry an N-linked (GlcNAc...) asparagine glycan. Position 163 (Asp-163) interacts with Ca(2+). Zn(2+) contacts are provided by His-173 and Asp-175. Residues 177-247 (YPFDGPSGLL…GALMFPIYTY (71 aa)) form an interaction with TIMP2 region. Ca(2+)-binding residues include Asp-180, Gly-181, Ser-183, and Leu-185. Zn(2+) is bound at residue His-188. Ca(2+) is bound by residues Asn-195, Gly-197, and Asp-199. His-201 serves as a coordination point for Zn(2+). Residues Asp-203, Asp-204, and Glu-206 each coordinate Ca(2+). His-223 lines the Zn(2+) pocket. Residue Glu-224 is part of the active site. Residues His-227, His-233, and Met-241 each coordinate Zn(2+). An interaction with collagen region spans residues 269 to 472 (PGDEDPNPKH…VMPTNSLLWC (204 aa)). Hemopexin repeat units lie at residues 282 to 331 (PDKC…WPEL), 332 to 378 (PNRI…GFPK), 380 to 428 (VKKI…FPGI), and 429 to 472 (GDKV…LLWC). An intrachain disulfide couples Cys-285 to Cys-472. 4 residues coordinate Ca(2+): Asp-292, Ile-294, Asp-336, and Ala-338. Position 367 is a phosphotyrosine; by PKDCC (Tyr-367). Residues Ser-384, Ala-386, Asp-433, and Val-435 each contribute to the Ca(2+) site.

Belongs to the peptidase M10A family. It depends on Ca(2+) as a cofactor. Requires Zn(2+) as cofactor. In terms of processing, the proenzyme is activated by removal of the propeptide; this cleavage can be effected by other matrix metalloproteinases, such as MMP2, MMP3 and MMP14 and may involve several cleavage steps. Cleavage can also be autocatalytic, after partial maturation by another protease or after treatment with 4-aminophenylmercuric acetate (APMA) (in vitro). N-glycosylated. Post-translationally, tyrosine phosphorylated by PKDCC/VLK. In terms of tissue distribution, seems to be specific to breast carcinomas.

It localises to the secreted. The protein resides in the extracellular space. The protein localises to the extracellular matrix. Its function is as follows. Plays a role in the degradation of extracellular matrix proteins including fibrillar collagen, fibronectin, TNC and ACAN. Cleaves triple helical collagens, including type I, type II and type III collagen, but has the highest activity with soluble type II collagen. Can also degrade collagen type IV, type XIV and type X. May also function by activating or degrading key regulatory proteins, such as TGFB1 and CCN2. Plays a role in wound healing, tissue remodeling, cartilage degradation, bone development, bone mineralization and ossification. Required for normal embryonic bone development and ossification. Plays a role in the healing of bone fractures via endochondral ossification. Plays a role in wound healing, probably by a mechanism that involves proteolytic activation of TGFB1 and degradation of CCN2. Plays a role in keratinocyte migration during wound healing. May play a role in cell migration and in tumor cell invasion. This chain is Collagenase 3 (MMP13), found in Equus caballus (Horse).